The chain runs to 418 residues: cAMP-dependent protein kinase type II-beta regulatory subunit (418 aa).

The tract at residues 2–153 (SIEIPAGLTE…RLQEACKDIL (152 aa)) is dimerization and phosphorylation. Residues 45–57 (RKGTARFGHEGRT) show a composition bias toward basic and acidic residues. The tract at residues 45-98 (RKGTARFGHEGRTWGDAGAAGGGGTPSKGVNFAEEPRHSDSENGEEEEEEAADA) is disordered. Residue Thr-69 is modified to Phosphothreonine. Phosphoserine occurs at positions 83 and 85. Residues 86-96 (ENGEEEEEEAA) show a composition bias toward acidic residues. Ser-114 is modified (phosphoserine). Residues 154 to 275 (LFKN…ESLP), Glu-223, Arg-232, 276 to 418 (FLKS…EPTA), Glu-352, and Arg-361 contribute to the 3',5'-cyclic AMP site.

This sequence belongs to the cAMP-dependent kinase regulatory chain family. As to quaternary structure, the inactive form of the enzyme is composed of two regulatory chains and two catalytic chains. Activation by cAMP produces two active catalytic monomers and a regulatory dimer that binds four cAMP molecules. Interacts with PRKACA and PRKACB. Interacts with the phosphorylated form of PJA2. Forms a complex composed of PRKAR2B, GSK3B and GSKIP through GSKIP interaction; facilitates PKA-induced phosphorylation and regulates GSK3B activity. Phosphorylated by the activated catalytic chain. As to expression, four types of regulatory chains are found: I-alpha, I-beta, II-alpha, and II-beta. Their expression varies among tissues and is in some cases constitutive and in others inducible.

Its subcellular location is the cytoplasm. It localises to the cell membrane. Functionally, regulatory subunit of the cAMP-dependent protein kinases involved in cAMP signaling in cells. Type II regulatory chains mediate membrane association by binding to anchoring proteins, including the MAP2 kinase. This Bos taurus (Bovine) protein is cAMP-dependent protein kinase type II-beta regulatory subunit (PRKAR2B).